Here is a 90-residue protein sequence, read N- to C-terminus: Small ribosomal subunit protein uS17 (90 aa).

It belongs to the universal ribosomal protein uS17 family. As to quaternary structure, part of the 30S ribosomal subunit.

One of the primary rRNA binding proteins, it binds specifically to the 5'-end of 16S ribosomal RNA. This is Small ribosomal subunit protein uS17 from Burkholderia cenocepacia (strain ATCC BAA-245 / DSM 16553 / LMG 16656 / NCTC 13227 / J2315 / CF5610) (Burkholderia cepacia (strain J2315)).